A 314-amino-acid polypeptide reads, in one-letter code: Secreted frizzled-related protein 1 (314 aa).

An N-terminal signal peptide occupies residues 1-31 (MGVGRSEGGRRGAALGVLLALGVALLAVGSA). An FZ domain is found at 53–169 (TKPHQCVAIP…FPQDYVCIAM (117 aa)). 5 disulfides stabilise this stretch: C58/C121, C68/C114, C105/C140, C129/C166, and C133/C157. Residue N173 is glycosylated (N-linked (GlcNAc...) asparagine). Intrachain disulfides connect C186-C256, C189-C258, and C203-C306. The NTR domain maps to 186–306 (CPPCDNEMKS…FMKKVKAPDC (121 aa)).

This sequence belongs to the secreted frizzled-related protein (sFRP) family.

It is found in the secreted. In terms of biological role, soluble frizzled-related proteins (sFRPS) function as modulators of Wnt signaling through direct interaction with Wnts. They have a role in regulating cell growth and differentiation in specific cell types. This chain is Secreted frizzled-related protein 1 (SFRP1), found in Gallus gallus (Chicken).